The sequence spans 69 residues: Sperm protamine P1 (69 aa).

The segment at 1 to 69 (MASYRNSRSR…RKRNNNTENK (69 aa)) is disordered. Basic residues-rich tracts occupy residues 7–25 (SRSRSRSRFRRRRRGRSRV) and 34–63 (RSSRRRRRGKGRAHSGKKGRRSGSRRRKRN).

Belongs to the protamine P1 family. Testis.

It is found in the nucleus. Its subcellular location is the chromosome. Its function is as follows. Protamines substitute for histones in the chromatin of sperm during the haploid phase of spermatogenesis. They compact sperm DNA into a highly condensed, stable and inactive complex. The chain is Sperm protamine P1 (PRM1) from Perameles gunnii (Eastern barred bandicoot).